We begin with the raw amino-acid sequence, 807 residues long: MHSSPTSTRKQASFAASASAQPRKSISFINPSKSSAGKGYAASNPNKLAVSRTMGFLTDMKPAEKLNVPSAKTVQVLDSKGVDVTPRPLYHPDPHAASAKPNKLLTSQEGSLGSDYISSYSLYQNTLNPSMLGQYTRSVLGSSSVSKSSISTTESMSEDLEDSSYKRDRLASFTDVRVLRSTAEAAISKEELEKTIEIILTETETLRFFDLPTVMFSTESEEAEKIIEKNKKYETLCRNRLGNDLYVERMMQTFNGAPKNKEVQCEKIILEEKGVVATTWDLYDSYNIPETLLAAKRSGYSSKGSLPAKDRDPKIQDSESSSLMDIENVILAKVQEDEEDNSEAILKSDKLHQDLFYMERVLMENVFQPKLAAYRQLPVYKEHEPEEPEETLQVENLKVAEDEPKKEDEEEVEMELELEIATEQSTIPANLERLWSFSCDLTKGLNVSSLSWNKANPDLLAVGYGNFGFREQKKGMACCWSIKNPMWPERIYQSSYGVTSVDFSNSSPNLLAVGYHNGTVAIYNVQSSHNIPVLDSSESPQKHLGPVWQVQWIEQDRGTTGDDKREILVSISADGRISKWIIRKGLDCHDLMRLKRTTATGGKKGGEKEKKGEALISRQAPGMCFAFHPKDTNIYLAGTEEGLIHKCSCSYNEQYLETYRGHKGPVYKVTWNPFCPDVFLSCSADWGVMIWHQDTVKPFLSFYPTTYVVYDVSWSPKSAYIFAAANENRVEIWDLQISTLDPLIVNVANPGIKFTTVLFAKETDCLLVGDSDGQVAVYELRNMPTASDTSRGDVINILLGPKTNHTG.

2 stretches are compositionally biased toward polar residues: residues 1 to 11 (MHSSPTSTRKQ) and 22 to 31 (PRKSISFINP). 2 disordered regions span residues 1 to 44 (MHSS…AASN) and 300 to 320 (YSSK…DSES). Over residues 32–43 (SKSSAGKGYAAS) the composition is skewed to low complexity. Positions 308-317 (AKDRDPKIQD) are enriched in basic and acidic residues. WD repeat units lie at residues 493–533 (QSSY…NIPV), 542–590 (KHLG…DCHD), 617–657 (SRQA…QYLE), 661–701 (GHKG…PFLS), 704–743 (PTTY…LDPL), and 749–788 (NPGI…TASD).

As to quaternary structure, part of the multisubunit axonemal dynein complex formed at least of two heavy chains and a number of intermediate and light chains. Associated with axonemal dynein subunits such as, DNAH2, DNAI3, and DYNLT1. Interacts with DYNLT1. Highly expressed in tissues containing motile cilia, including the trachea, lung, oviduct, and testis.

Its subcellular location is the cytoplasm. The protein resides in the cytoskeleton. The protein localises to the flagellum axoneme. It is found in the cilium axoneme. It localises to the dynein axonemal particle. Plays a critical role in the assembly of axonemal dynein complex, thereby playing a role in ciliary motility. In Mus musculus (Mouse), this protein is Dynein axonemal intermediate chain 4 (Dnai4).